A 1379-amino-acid chain; its full sequence is DNA-directed RNA polymerase subunit beta (1379 aa).

The protein belongs to the RNA polymerase beta chain family. The RNAP catalytic core consists of 2 alpha, 1 beta, 1 beta' and 1 omega subunit. When a sigma factor is associated with the core the holoenzyme is formed, which can initiate transcription.

It carries out the reaction RNA(n) + a ribonucleoside 5'-triphosphate = RNA(n+1) + diphosphate. Functionally, DNA-dependent RNA polymerase catalyzes the transcription of DNA into RNA using the four ribonucleoside triphosphates as substrates. This Ruegeria sp. (strain TM1040) (Silicibacter sp.) protein is DNA-directed RNA polymerase subunit beta.